Reading from the N-terminus, the 75-residue chain is ATP synthase subunit c (75 aa).

2 helical membrane passes run 9-29 (IGAGLAAIGMIGSGIGVGNIW) and 52-72 (IGFAVTEAIALFALVVALILL).

This sequence belongs to the ATPase C chain family. F-type ATPases have 2 components, F(1) - the catalytic core - and F(0) - the membrane proton channel. F(1) has five subunits: alpha(3), beta(3), gamma(1), delta(1), epsilon(1). F(0) has four main subunits: a(1), b(1), b'(1) and c(10-14). The alpha and beta chains form an alternating ring which encloses part of the gamma chain. F(1) is attached to F(0) by a central stalk formed by the gamma and epsilon chains, while a peripheral stalk is formed by the delta, b and b' chains.

Its subcellular location is the cell inner membrane. F(1)F(0) ATP synthase produces ATP from ADP in the presence of a proton or sodium gradient. F-type ATPases consist of two structural domains, F(1) containing the extramembraneous catalytic core and F(0) containing the membrane proton channel, linked together by a central stalk and a peripheral stalk. During catalysis, ATP synthesis in the catalytic domain of F(1) is coupled via a rotary mechanism of the central stalk subunits to proton translocation. Its function is as follows. Key component of the F(0) channel; it plays a direct role in translocation across the membrane. A homomeric c-ring of between 10-14 subunits forms the central stalk rotor element with the F(1) delta and epsilon subunits. The polypeptide is ATP synthase subunit c (Rhodospirillum rubrum (strain ATCC 11170 / ATH 1.1.1 / DSM 467 / LMG 4362 / NCIMB 8255 / S1)).